The chain runs to 522 residues: Probable cytochrome P450 12e1, mitochondrial (522 aa).

Cys-468 lines the heme pocket.

Belongs to the cytochrome P450 family. Requires heme as cofactor.

It localises to the mitochondrion membrane. This is Probable cytochrome P450 12e1, mitochondrial (Cyp12e1) from Drosophila melanogaster (Fruit fly).